Reading from the N-terminus, the 244-residue chain is 1-(5-phosphoribosyl)-5-[(5-phosphoribosylamino)methylideneamino] imidazole-4-carboxamide isomerase (244 aa).

The active-site Proton acceptor is the D8. The active-site Proton donor is D131.

The protein belongs to the HisA/HisF family.

It is found in the cytoplasm. It catalyses the reaction 1-(5-phospho-beta-D-ribosyl)-5-[(5-phospho-beta-D-ribosylamino)methylideneamino]imidazole-4-carboxamide = 5-[(5-phospho-1-deoxy-D-ribulos-1-ylimino)methylamino]-1-(5-phospho-beta-D-ribosyl)imidazole-4-carboxamide. It functions in the pathway amino-acid biosynthesis; L-histidine biosynthesis; L-histidine from 5-phospho-alpha-D-ribose 1-diphosphate: step 4/9. In Thermomicrobium roseum (strain ATCC 27502 / DSM 5159 / P-2), this protein is 1-(5-phosphoribosyl)-5-[(5-phosphoribosylamino)methylideneamino] imidazole-4-carboxamide isomerase.